A 296-amino-acid polypeptide reads, in one-letter code: Fructose-bisphosphate aldolase class 1 (296 aa).

Catalysis depends on glutamate 175, which acts as the Proton acceptor. Catalysis depends on lysine 212, which acts as the Schiff-base intermediate with dihydroxyacetone-P.

It belongs to the class I fructose-bisphosphate aldolase family.

The enzyme catalyses beta-D-fructose 1,6-bisphosphate = D-glyceraldehyde 3-phosphate + dihydroxyacetone phosphate. It functions in the pathway carbohydrate degradation; glycolysis; D-glyceraldehyde 3-phosphate and glycerone phosphate from D-glucose: step 4/4. The sequence is that of Fructose-bisphosphate aldolase class 1 from Staphylococcus aureus (strain USA300).